We begin with the raw amino-acid sequence, 336 residues long: MNDRLSLTSLFPRCLTTCLYIWTAYITLTRIHQIPRWFLALTIVPTLAVALYTYYKVIARGPGSPLDFPDLLVHDLKAAENGLELPPEYMSKRCLTLKHDGRFRVCQVCHVWKPDRCHHCSSCDVCILKMDHHCPWFAECTGFRNQKFFIQFLMYTTLYAFLVLIYTCYELGTWFNSGSFNRELIDFHLLGVALLAVAVFISVLAFTCFSIYQVCKNQTTIEVHGMRRYRRDLEILNDSYGTNEHLENIFDLGSSMANWQDIMGTSWLEWILPIETFKYKKSKHTKDEKGLYFNVRPQVQDRLLSSRCLEDQLLRRVTPRPSLEADRASVEIIDAN.

Residues 1–6 are Cytoplasmic-facing; it reads MNDRLS. Residues 7–29 traverse the membrane as a helical segment; sequence LTSLFPRCLTTCLYIWTAYITLT. The Vacuolar portion of the chain corresponds to 30 to 37; sequence RIHQIPRW. The chain crosses the membrane as a helical span at residues 38–58; sequence FLALTIVPTLAVALYTYYKVI. Residues 59 to 147 are Cytoplasmic-facing; it reads ARGPGSPLDF…AECTGFRNQK (89 aa). The DHHC domain maps to 104–154; sequence RVCQVCHVWKPDRCHHCSSCDVCILKMDHHCPWFAECTGFRNQKFFIQFLM. Residues 148–168 form a helical membrane-spanning segment; sequence FFIQFLMYTTLYAFLVLIYTC. The Vacuolar segment spans residues 169–188; it reads YELGTWFNSGSFNRELIDFH. A helical membrane pass occupies residues 189–209; that stretch reads LLGVALLAVAVFISVLAFTCF. Residues 210–336 are Cytoplasmic-facing; it reads SIYQVCKNQT…RASVEIIDAN (127 aa).

The protein belongs to the DHHC palmitoyltransferase family. PFA3 subfamily. Autopalmitoylated.

The protein resides in the vacuole membrane. The catalysed reaction is L-cysteinyl-[protein] + hexadecanoyl-CoA = S-hexadecanoyl-L-cysteinyl-[protein] + CoA. In terms of biological role, palmitoyltransferase specific for VAC8. Palmitoylates VAC8 at one or more of its N-terminal cysteine residues, which is required for its proper membrane localization. This Saccharomyces cerevisiae (strain ATCC 204508 / S288c) (Baker's yeast) protein is Palmitoyltransferase PFA3 (PFA3).